A 103-amino-acid chain; its full sequence is MALSSIFGGGSPSQQSNLPTSSASSSVKDQLKGQIAQELAVANATELVNKVTENCFEKCLMAPYTSKQDTCVDQCLAKYMRSWNAISQAYVARIQQASANGDI.

The tract at residues M1–S25 is disordered. Residues P12–S25 are compositionally biased toward polar residues. The Twin CX3C motif signature appears at C55–C75. 2 disulfides stabilise this stretch: C55–C75 and C59–C71.

The protein belongs to the small Tim family. Heterohexamer; composed of 3 copies of TIM8 and 3 copies of TIM13, named soluble 70 kDa complex. Associates with the TIM22 complex, whose core is composed of TIM22 and TIM54. Interacts with the transmembrane regions of multi-pass transmembrane proteins in transit.

The protein localises to the mitochondrion inner membrane. Its function is as follows. Mitochondrial intermembrane chaperone that participates in the import and insertion of some multi-pass transmembrane proteins into the mitochondrial inner membrane. Also required for the transfer of beta-barrel precursors from the TOM complex to the sorting and assembly machinery (SAM complex) of the outer membrane. Acts as a chaperone-like protein that protects the hydrophobic precursors from aggregation and guide them through the mitochondrial intermembrane space. The TIM8-TIM13 complex is non essential and only mediates the import of few proteins, while the predominant TIM9-TIM10 70 kDa complex is crucial and mediates the import of much more proteins. The sequence is that of Mitochondrial import inner membrane translocase subunit TIM13 (TIM13) from Eremothecium gossypii (strain ATCC 10895 / CBS 109.51 / FGSC 9923 / NRRL Y-1056) (Yeast).